Reading from the N-terminus, the 284-residue chain is Homeobox protein SMOX-5 (284 aa).

A DNA-binding region (homeobox) is located at residues 37 to 96 (RRKTRTTFSNCQLNELENNFNRQRYLTPTDRDRIAKHLGLTNTQVITWFQNRRAKLKREA). Positions 117–172 (LSLSDHDHEETQIDDENEQGDNNNDDDGDDNDVEEDDGEEQEKNHTKYLTQPPSIS) are disordered. Positions 128–156 (QIDDENEQGDNNNDDDGDDNDVEEDDGEE) are enriched in acidic residues.

The protein localises to the nucleus. The sequence is that of Homeobox protein SMOX-5 (SMOX-5) from Schistosoma mansoni (Blood fluke).